Here is a 73-residue protein sequence, read N- to C-terminus: uncharacterized protein (73 aa).

N-glycosylated.

This is an uncharacterized protein from Saccharomyces cerevisiae (strain ATCC 204508 / S288c) (Baker's yeast).